The chain runs to 222 residues: Embryonic stem cell-related gene protein (222 aa).

As to expression, expressed only in fetal ovary and in undifferentiated ES cells.

It is found in the nucleus. The polypeptide is Embryonic stem cell-related gene protein (ESRG) (Homo sapiens (Human)).